The primary structure comprises 220 residues: Peptidyl-tRNA hydrolase (220 aa).

Residue tyrosine 14 participates in tRNA binding. Histidine 19 (proton acceptor) is an active-site residue. Phenylalanine 60, asparagine 62, and asparagine 106 together coordinate tRNA.

This sequence belongs to the PTH family. As to quaternary structure, monomer.

It is found in the cytoplasm. It carries out the reaction an N-acyl-L-alpha-aminoacyl-tRNA + H2O = an N-acyl-L-amino acid + a tRNA + H(+). Hydrolyzes ribosome-free peptidyl-tRNAs (with 1 or more amino acids incorporated), which drop off the ribosome during protein synthesis, or as a result of ribosome stalling. Functionally, catalyzes the release of premature peptidyl moieties from peptidyl-tRNA molecules trapped in stalled 50S ribosomal subunits, and thus maintains levels of free tRNAs and 50S ribosomes. The chain is Peptidyl-tRNA hydrolase from Campylobacter hominis (strain ATCC BAA-381 / DSM 21671 / CCUG 45161 / LMG 19568 / NCTC 13146 / CH001A).